We begin with the raw amino-acid sequence, 368 residues long: Agmatine deiminase (368 aa).

Residue cysteine 357 is the Amidino-cysteine intermediate of the active site.

This sequence belongs to the agmatine deiminase family. Homodimer.

It catalyses the reaction agmatine + H2O = N-carbamoylputrescine + NH4(+). It participates in amine and polyamine biosynthesis; putrescine biosynthesis via agmatine pathway; N-carbamoylputrescine from agmatine: step 1/1. Mediates the hydrolysis of agmatine into N-carbamoylputrescine in the arginine decarboxylase (ADC) pathway of putrescine biosynthesis, a basic polyamine. The sequence is that of Agmatine deiminase from Pseudomonas aeruginosa (strain LESB58).